The primary structure comprises 170 residues: Probable inosine/xanthosine triphosphatase (170 aa).

7–12 (TTNPVK) provides a ligand contact to substrate. Mg(2+) is bound at residue aspartate 37.

It belongs to the YjjX NTPase family. As to quaternary structure, homodimer. Requires Mg(2+) as cofactor. It depends on Mn(2+) as a cofactor.

It catalyses the reaction XTP + H2O = XDP + phosphate + H(+). The catalysed reaction is ITP + H2O = IDP + phosphate + H(+). In terms of biological role, phosphatase that hydrolyzes non-canonical purine nucleotides such as XTP and ITP to their respective diphosphate derivatives. Probably excludes non-canonical purines from DNA/RNA precursor pool, thus preventing their incorporation into DNA/RNA and avoiding chromosomal lesions. In Methanopyrus kandleri (strain AV19 / DSM 6324 / JCM 9639 / NBRC 100938), this protein is Probable inosine/xanthosine triphosphatase.